Here is a 396-residue protein sequence, read N- to C-terminus: MTTNTVSRKVAWLRVVTLAVAAFIFNTTEFVPVGLLSDIAHSFHMQTAQVGIMLTIYAWVVALMSLPFMLMTSQVERRKLLICLFVVFIASHVLSFLSWSFTVLVISRIGVAFAHAIFWSITASLAIRMAPAGKRAQALSLIATGTALAMVLGLPLGRIVGQYFGWRMTFFAIGIGALITLLCLIKLLPLLPSEHSGSLKSLPLLFRRPALMSIYLLTVVVVTAHYTAYSYIEPFVQNIAGFSANFATALLLLLGGAGIIGSVIFGKLGNQYASALVSTAIALLLVCLALLLPAANSEIHLGMLSIFWGIAMMIIGLGMQVKVLALAPDATDVAMALFSGIFNIGIGAGALVGNQVSLHWSMSMIGYVGAVPAFAALIWSIIIFRRWPVTLEEQTQ.

12 helical membrane-spanning segments follow: residues valine 15–leucine 35, valine 50–leucine 70, leucine 81–phenylalanine 101, valine 103–alanine 123, alanine 136–leucine 156, phenylalanine 170–leucine 190, proline 209–tyrosine 229, phenylalanine 246–glycine 266, alanine 275–alanine 295, isoleucine 299–methionine 319, valine 333–glycine 353, and methionine 364–phenylalanine 384.

The protein belongs to the major facilitator superfamily. SotB (TC 2.A.1.2) family.

It is found in the cell inner membrane. Functionally, involved in the efflux of sugars. The physiological role may be the reduction of the intracellular concentration of toxic sugars or sugar metabolites. In Escherichia coli O6:K15:H31 (strain 536 / UPEC), this protein is Probable sugar efflux transporter.